A 149-amino-acid chain; its full sequence is SsrA-binding protein (149 aa).

It belongs to the SmpB family.

It localises to the cytoplasm. Its function is as follows. Required for rescue of stalled ribosomes mediated by trans-translation. Binds to transfer-messenger RNA (tmRNA), required for stable association of tmRNA with ribosomes. tmRNA and SmpB together mimic tRNA shape, replacing the anticodon stem-loop with SmpB. tmRNA is encoded by the ssrA gene; the 2 termini fold to resemble tRNA(Ala) and it encodes a 'tag peptide', a short internal open reading frame. During trans-translation Ala-aminoacylated tmRNA acts like a tRNA, entering the A-site of stalled ribosomes, displacing the stalled mRNA. The ribosome then switches to translate the ORF on the tmRNA; the nascent peptide is terminated with the 'tag peptide' encoded by the tmRNA and targeted for degradation. The ribosome is freed to recommence translation, which seems to be the essential function of trans-translation. In Anaplasma marginale (strain Florida), this protein is SsrA-binding protein.